The chain runs to 430 residues: Synaptotagmin-11 (430 aa).

Residues 1 to 15 (MAEITNIRPSFDVSP) are Vesicular-facing. Residues 16–36 (VAAGLIGASVLVVCVSVTVFV) traverse the membrane as a helical segment. At 37-430 (WTCCHQQAEK…IAKWHSLSEY (394 aa)) the chain is on the cytoplasmic side. Over residues 79-90 (RRDKDGPRRESG) the composition is skewed to basic and acidic residues. Disordered stretches follow at residues 79–120 (RRDK…CMDQ) and 132–152 (RSPMTSLTPGESKATSPSSPE). Ser-133 is subject to Phosphoserine. Over residues 134–150 (PMTSLTPGESKATSPSS) the composition is skewed to polar residues. 2 consecutive C2 domains span residues 156–278 (MLGS…QLTR) and 290–425 (SRGE…AKWH). Ca(2+) is bound by residues Asp-249, Ser-252, and Asp-255.

It belongs to the synaptotagmin family. Homodimer. Can also form heterodimers. Interacts with PRKN. Interacts (via C2 2 domain) with AGO2 and SND1; the interaction with SND1 is direct. Interacts with KIF1A; the interaction increases in presence of calcium. Requires Ca(2+) as cofactor. Ubiquitinated, at least by PRKN, and targeted to the proteasome complex for degradation. Ubiquitination is inhibited by ATP13A2. Expressed in cerebellun, cerebellar cortex, hippocampus, olfactory bulb and spinal cord (at protein level). Expressed by neurons, astrocytes and microglia (at protein level). Expressed in macrophages (at protein level).

The protein resides in the cytoplasmic vesicle membrane. It is found in the perikaryon. It localises to the golgi apparatus. The protein localises to the trans-Golgi network membrane. Its subcellular location is the recycling endosome membrane. The protein resides in the lysosome membrane. It is found in the cytoplasmic vesicle. It localises to the phagosome. The protein localises to the cell projection. Its subcellular location is the axon. The protein resides in the dendrite. It is found in the postsynaptic density. It localises to the clathrin-coated vesicle membrane. Functionally, synaptotagmin family member involved in vesicular and membrane trafficking which does not bind Ca(2+). Inhibits clathrin-mediated and bulk endocytosis, functions to ensure precision in vesicle retrieval. Plays an important role in dopamine transmission by regulating endocytosis and the vesicle-recycling process. Essential component of a neuronal vesicular trafficking pathway that differs from the synaptic vesicle trafficking pathway but is crucial for development and synaptic plasticity. In macrophages and microglia, inhibits the conventional cytokine secretion, of at least IL6 and TNF, and phagocytosis. In astrocytes, regulates lysosome exocytosis, mechanism required for the repair of injured astrocyte cell membrane. Required for the ATP13A2-mediated regulation of the autophagy-lysosome pathway. The polypeptide is Synaptotagmin-11 (Mus musculus (Mouse)).